Consider the following 80-residue polypeptide: Teretoxin Tan6.1 (80 aa).

Residues 1-21 form the signal peptide; it reads MATSGRLLCLCLVLGLVFESL. A propeptide spanning residues 22 to 34 is cleaved from the precursor; it reads GHPGARLPKDGKR.

It belongs to the teretoxin M (TM) superfamily. Contains 3 disulfide bonds. Expressed by the venom duct.

It is found in the secreted. In Terebra anilis (Auger snail), this protein is Teretoxin Tan6.1.